A 294-amino-acid polypeptide reads, in one-letter code: Acetyl-coenzyme A carboxylase carboxyl transferase subunit beta (294 aa).

Residues 30–294 (IMTKCPECKK…PGVGGEVDGE (265 aa)) form the CoA carboxyltransferase N-terminal domain. The Zn(2+) site is built by Cys34, Cys37, Cys53, and Cys56. The segment at 34 to 56 (CPECKKIMYTKELQKNLMVCNYC) adopts a C4-type zinc-finger fold.

It belongs to the AccD/PCCB family. Acetyl-CoA carboxylase is a heterohexamer composed of biotin carboxyl carrier protein (AccB), biotin carboxylase (AccC) and two subunits each of ACCase subunit alpha (AccA) and ACCase subunit beta (AccD). Zn(2+) is required as a cofactor.

It is found in the cytoplasm. It catalyses the reaction N(6)-carboxybiotinyl-L-lysyl-[protein] + acetyl-CoA = N(6)-biotinyl-L-lysyl-[protein] + malonyl-CoA. It functions in the pathway lipid metabolism; malonyl-CoA biosynthesis; malonyl-CoA from acetyl-CoA: step 1/1. Component of the acetyl coenzyme A carboxylase (ACC) complex. Biotin carboxylase (BC) catalyzes the carboxylation of biotin on its carrier protein (BCCP) and then the CO(2) group is transferred by the transcarboxylase to acetyl-CoA to form malonyl-CoA. The protein is Acetyl-coenzyme A carboxylase carboxyl transferase subunit beta of Listeria monocytogenes serovar 1/2a (strain ATCC BAA-679 / EGD-e).